Consider the following 341-residue polypeptide: MNSYLRKLVEGKHLTEEEMYRAGLLLLNENILESEIAAFLVLLKAKGETAEEIYGLVRALREKALPFSNHIQGAMDNCGTGGDGAQTFNISTTSAFVLAGAGVKVAKHGNRAVSSKTGSADLLEELGVNISSTPSEIDYLLEHVGIAFLFAPAMHPALTRIMKIRKELNVPTIFNLIGPLTNPVNLETQFVGIYKRDMLLPVAQVLQKLGRKQALVVNGSGFLDEASLQGENHVVILKDNEIVEMSIDPEKYGFSRVKNEEIRGGNSKENAKITLEVLSGEKSVYRDTVLLNAGLALFANGKTETIEEGIKLAAHSIDSGKALAKLNLLIVASNEKLERVN.

5-phospho-alpha-D-ribose 1-diphosphate contacts are provided by residues Gly-79, 82–83, Thr-87, 89–92, 107–115, and Ser-119; these read GD, NIST, and KHGNRAVSS. Gly-79 contributes to the anthranilate binding site. Ser-91 provides a ligand contact to Mg(2+). Asn-110 is a binding site for anthranilate. Arg-165 contributes to the anthranilate binding site. Residues Asp-224 and Glu-225 each contribute to the Mg(2+) site.

It belongs to the anthranilate phosphoribosyltransferase family. In terms of assembly, homodimer. It depends on Mg(2+) as a cofactor.

It carries out the reaction N-(5-phospho-beta-D-ribosyl)anthranilate + diphosphate = 5-phospho-alpha-D-ribose 1-diphosphate + anthranilate. The protein operates within amino-acid biosynthesis; L-tryptophan biosynthesis; L-tryptophan from chorismate: step 2/5. Catalyzes the transfer of the phosphoribosyl group of 5-phosphorylribose-1-pyrophosphate (PRPP) to anthranilate to yield N-(5'-phosphoribosyl)-anthranilate (PRA). This Bacillus cereus (strain ATCC 14579 / DSM 31 / CCUG 7414 / JCM 2152 / NBRC 15305 / NCIMB 9373 / NCTC 2599 / NRRL B-3711) protein is Anthranilate phosphoribosyltransferase.